Here is a 121-residue protein sequence, read N- to C-terminus: Flagellar protein FliT (121 aa).

Residues 1 to 50 (MNHAPHLYFAWQQLVDKSQLMLRLATEEQWDELIASEMAYVNAVQEIAHL) form a required for homodimerization region. The interval 60–98 (MQEQLRPMLRLILDNESKVKQLLQIRMDELAKLVGQSSV) is fliD binding.

The protein belongs to the FliT family. In terms of assembly, homodimer. Interacts with FliD and FlhC.

It is found in the cytoplasm. The protein localises to the cytosol. In terms of biological role, dual-function protein that regulates the transcription of class 2 flagellar operons and that also acts as an export chaperone for the filament-capping protein FliD. As a transcriptional regulator, acts as an anti-FlhDC factor; it directly binds FlhC, thus inhibiting the binding of the FlhC/FlhD complex to class 2 promoters, resulting in decreased expression of class 2 flagellar operons. As a chaperone, effects FliD transition to the membrane by preventing its premature polymerization, and by directing it to the export apparatus. The sequence is that of Flagellar protein FliT from Shigella sonnei (strain Ss046).